Here is a 100-residue protein sequence, read N- to C-terminus: Small ribosomal subunit protein uS14 (100 aa).

It belongs to the universal ribosomal protein uS14 family. Part of the 30S ribosomal subunit. Contacts proteins S3 and S10.

In terms of biological role, binds 16S rRNA, required for the assembly of 30S particles and may also be responsible for determining the conformation of the 16S rRNA at the A site. In Trichormus variabilis (strain ATCC 29413 / PCC 7937) (Anabaena variabilis), this protein is Small ribosomal subunit protein uS14.